The following is a 676-amino-acid chain: Envelope glycoprotein (676 aa).

Positions 1–34 (MACSTLSKSPKDKIDPRDLLIPLILFLSLKGARS) are cleaved as a signal peptide. Positions 35–270 (AAPGSSPHQV…SYQNLGPRIP (236 aa)) are receptor-binding domain (RBD). Topologically, residues 35–620 (AAPGSSPHQV…FNRSPWFTTL (586 aa)) are extracellular. Asn46 carries N-linked (GlcNAc...) asparagine; by host glycosylation. 5 disulfides stabilise this stretch: Cys80/Cys132, Cys106/Cys121, Cys107/Cys117, Cys155/Cys175, and Cys167/Cys180. Zn(2+) is bound at residue His89. Asp120 contacts Zn(2+). A glycan (N-linked (GlcNAc...) asparagine; by host) is linked at Asn202. Residues Cys212 and Cys218 are joined by a disulfide bond. Positions 287–321 (NPLPKPAKSPPASSSTPTLISPSPTPTQPPPAGTG) are disordered. Residues 296–308 (PPASSSTPTLISP) show a composition bias toward low complexity. The segment covering 309–318 (SPTPTQPPPA) has biased composition (pro residues). N-linked (GlcNAc...) asparagine; by host glycosylation occurs at Asn336. 6 cysteine pairs are disulfide-bonded: Cys346–Cys349, Cys346–Cys573, Cys376–Cys430, Cys395–Cys407, Cys437–Cys450, and Cys565–Cys572. The CXXC motif lies at 346–349 (CWLC). N-linked (GlcNAc...) asparagine; by host glycosylation is found at Asn368 and Asn375. Residues Asn408 and Asn444 are each glycosylated (N-linked (GlcNAc...) asparagine; by host). The fusion peptide stretch occupies residues 482-502 (VSLTLALLLGGLTMGGIAAGV). The stretch at 513–547 (QQFQQLHAAVQDDLKEVEKSITNLEKSLTSLSEVV) forms a coiled coil. An immunosuppression region spans residues 548 to 564 (LQNRRGLDLLFLKEGGL). Positions 565–573 (CAALKEECC) match the CX6CC motif. A helical transmembrane segment spans residues 621–641 (ISTIMGPLIILLLILLFGPCI). Cys640 carries the S-palmitoyl cysteine; by host lipid modification. At 642–676 (LNRLVQFVKDRISVVQALVLTQQYHQLKPLEYEPQ) the chain is on the cytoplasmic side. The YXXL motif; contains endocytosis signal signature appears at 665-668 (YHQL).

As to quaternary structure, the mature envelope protein (Env) consists of a trimer of SU-TM heterodimers attached by a labile interchain disulfide bond. In terms of processing, specific enzymatic cleavages in vivo yield mature proteins. Envelope glycoproteins are synthesized as an inactive precursor that is N-glycosylated and processed likely by host cell furin or by a furin-like protease in the Golgi to yield the mature SU and TM proteins. The cleavage site between SU and TM requires the minimal sequence [KR]-X-[KR]-R. The R-peptide is released from the C-terminus of the cytoplasmic tail of the TM protein upon particle formation as a result of proteolytic cleavage by the viral protease. Cleavage of this peptide is required for TM to become fusogenic. The CXXC motif is highly conserved across a broad range of retroviral envelope proteins. It is thought to participate in the formation of a labile disulfide bond possibly with the CX6CC motif present in the transmembrane protein. Isomerization of the intersubunit disulfide bond to an SU intrachain disulfide bond is thought to occur upon receptor recognition in order to allow membrane fusion. Post-translationally, the transmembrane protein is palmitoylated. In terms of processing, the R-peptide is palmitoylated.

The protein resides in the virion membrane. Its subcellular location is the host cell membrane. Functionally, the surface protein (SU) attaches the virus to the host cell by binding to its receptor. This interaction triggers the refolding of the transmembrane protein (TM) and is thought to activate its fusogenic potential by unmasking its fusion peptide. Fusion occurs at the host cell plasma membrane. Its function is as follows. The transmembrane protein (TM) acts as a class I viral fusion protein. Under the current model, the protein has at least 3 conformational states: pre-fusion native state, pre-hairpin intermediate state, and post-fusion hairpin state. During viral and target cell membrane fusion, the coiled coil regions (heptad repeats) assume a trimer-of-hairpins structure, positioning the fusion peptide in close proximity to the C-terminal region of the ectodomain. The formation of this structure appears to drive apposition and subsequent fusion of viral and target cell membranes. Membranes fusion leads to delivery of the nucleocapsid into the cytoplasm. The sequence is that of Envelope glycoprotein (env) from Friend murine leukemia virus (isolate FB29) (FrMLV).